Here is a 363-residue protein sequence, read N- to C-terminus: Aminomethyltransferase (363 aa).

Belongs to the GcvT family. The glycine cleavage system is composed of four proteins: P, T, L and H.

The catalysed reaction is N(6)-[(R)-S(8)-aminomethyldihydrolipoyl]-L-lysyl-[protein] + (6S)-5,6,7,8-tetrahydrofolate = N(6)-[(R)-dihydrolipoyl]-L-lysyl-[protein] + (6R)-5,10-methylene-5,6,7,8-tetrahydrofolate + NH4(+). In terms of biological role, the glycine cleavage system catalyzes the degradation of glycine. This is Aminomethyltransferase from Dechloromonas aromatica (strain RCB).